The sequence spans 158 residues: Cyclic pyranopterin monophosphate synthase (158 aa).

Substrate-binding positions include 74 to 76 and 112 to 113; these read MCH and ME. D127 is an active-site residue.

Belongs to the MoaC family. As to quaternary structure, homohexamer; trimer of dimers.

It catalyses the reaction (8S)-3',8-cyclo-7,8-dihydroguanosine 5'-triphosphate = cyclic pyranopterin phosphate + diphosphate. It participates in cofactor biosynthesis; molybdopterin biosynthesis. Catalyzes the conversion of (8S)-3',8-cyclo-7,8-dihydroguanosine 5'-triphosphate to cyclic pyranopterin monophosphate (cPMP). The sequence is that of Cyclic pyranopterin monophosphate synthase from Helicobacter pylori (strain P12).